A 324-amino-acid polypeptide reads, in one-letter code: ATP-dependent 6-phosphofructokinase (324 aa).

G11 serves as a coordination point for ATP. 21-25 (RAVVR) serves as a coordination point for ADP. Residues 72–73 (RE) and 102–105 (GNGS) contribute to the ATP site. N103 serves as a coordination point for Mg(2+). Substrate is bound at residue 126–128 (TID). The active-site Proton acceptor is the D128. Residue K155 coordinates ADP. Substrate contacts are provided by residues R163 and 170–172 (MGR). Residues 186–188 (GAE) and 214–216 (KNF) each bind ADP. Substrate is bound by residues E223, R248, and 254-257 (YIQR).

The protein belongs to the phosphofructokinase type A (PFKA) family. ATP-dependent PFK group I subfamily. Prokaryotic clade 'B1' sub-subfamily. In terms of assembly, homotetramer. It depends on Mg(2+) as a cofactor.

It is found in the cytoplasm. The enzyme catalyses beta-D-fructose 6-phosphate + ATP = beta-D-fructose 1,6-bisphosphate + ADP + H(+). It participates in carbohydrate degradation; glycolysis; D-glyceraldehyde 3-phosphate and glycerone phosphate from D-glucose: step 3/4. With respect to regulation, allosterically activated by ADP and other diphosphonucleosides, and allosterically inhibited by phosphoenolpyruvate. Catalyzes the phosphorylation of D-fructose 6-phosphate to fructose 1,6-bisphosphate by ATP, the first committing step of glycolysis. The polypeptide is ATP-dependent 6-phosphofructokinase (Sulfurihydrogenibium sp. (strain YO3AOP1)).